Consider the following 555-residue polypeptide: Esterase-5A (555 aa).

Residues 1-19 (MHLVRWLICLIQLWIQLGA) form the signal peptide. A disulfide bond links cysteine 87 and cysteine 106. 2 N-linked (GlcNAc...) asparagine glycosylation sites follow: asparagine 95 and asparagine 116. Catalysis depends on serine 210, which acts as the Acyl-ester intermediate. A disulfide bridge connects residues cysteine 262 and cysteine 274. N-linked (GlcNAc...) asparagine glycans are attached at residues asparagine 479 and asparagine 510. A disulfide bond links cysteine 518 and cysteine 539.

This sequence belongs to the type-B carboxylesterase/lipase family.

The protein resides in the secreted. It carries out the reaction a carboxylic ester + H2O = an alcohol + a carboxylate + H(+). The sequence is that of Esterase-5A (Est-5A) from Drosophila miranda (Fruit fly).